We begin with the raw amino-acid sequence, 283 residues long: Diaminopimelate epimerase (283 aa).

Substrate-binding residues include asparagine 13 and asparagine 65. The active-site Proton donor is the cysteine 74. Residues 75–76, asparagine 196, and 214–215 each bind substrate; these read GN and ER. The Proton acceptor role is filled by cysteine 223. 224 to 225 serves as a coordination point for substrate; that stretch reads GT.

This sequence belongs to the diaminopimelate epimerase family. In terms of assembly, homodimer.

Its subcellular location is the cytoplasm. The enzyme catalyses (2S,6S)-2,6-diaminopimelate = meso-2,6-diaminopimelate. It participates in amino-acid biosynthesis; L-lysine biosynthesis via DAP pathway; DL-2,6-diaminopimelate from LL-2,6-diaminopimelate: step 1/1. Catalyzes the stereoinversion of LL-2,6-diaminopimelate (L,L-DAP) to meso-diaminopimelate (meso-DAP), a precursor of L-lysine and an essential component of the bacterial peptidoglycan. The polypeptide is Diaminopimelate epimerase (Alkaliphilus metalliredigens (strain QYMF)).